We begin with the raw amino-acid sequence, 27 residues long: U1-poneritoxin-Na3b (27 aa).

Belongs to the ponericin-G family. Expressed by the venom gland.

The protein localises to the secreted. In terms of biological role, shows a broad spectrum of activity against both Gram-positive and Gram-negative bacteria. Also has antimicrobial activity against S.cerevisiae. Has insecticidal and non-hemolytic activity. In Neoponera apicalis (Ant), this protein is U1-poneritoxin-Na3b.